We begin with the raw amino-acid sequence, 239 residues long: tRNA (guanine-N(1)-)-methyltransferase (239 aa).

Residues Gly-110 and 130–135 (VGDYVL) contribute to the S-adenosyl-L-methionine site.

This sequence belongs to the RNA methyltransferase TrmD family. As to quaternary structure, homodimer.

It is found in the cytoplasm. It carries out the reaction guanosine(37) in tRNA + S-adenosyl-L-methionine = N(1)-methylguanosine(37) in tRNA + S-adenosyl-L-homocysteine + H(+). In terms of biological role, specifically methylates guanosine-37 in various tRNAs. This is tRNA (guanine-N(1)-)-methyltransferase from Borrelia hermsii (strain HS1 / DAH).